The sequence spans 376 residues: Alcohol dehydrogenase class-3 (376 aa).

Cys-40, His-62, Cys-92, Cys-95, Cys-98, Cys-106, and Cys-170 together coordinate Zn(2+).

The protein belongs to the zinc-containing alcohol dehydrogenase family. Class-III subfamily. As to quaternary structure, homodimer. Zn(2+) is required as a cofactor.

It localises to the cytoplasm. The catalysed reaction is a primary alcohol + NAD(+) = an aldehyde + NADH + H(+). The enzyme catalyses a secondary alcohol + NAD(+) = a ketone + NADH + H(+). It catalyses the reaction S-(hydroxymethyl)glutathione + NADP(+) = S-formylglutathione + NADPH + H(+). It carries out the reaction S-(hydroxymethyl)glutathione + NAD(+) = S-formylglutathione + NADH + H(+). Its function is as follows. Oxidizes long-chain aliphatic alcohols, long-chain hydroxylated fatty acids and S-hydroxymethylglutathione (hmGSH) in increasing order of preference. Shows little or no activity with short-chain aliphatic alcohols. The polypeptide is Alcohol dehydrogenase class-3 (adhI) (Cereibacter sphaeroides (strain ATCC 17023 / DSM 158 / JCM 6121 / CCUG 31486 / LMG 2827 / NBRC 12203 / NCIMB 8253 / ATH 2.4.1.) (Rhodobacter sphaeroides)).